The sequence spans 620 residues: Sterile alpha motif domain-containing protein 15 (620 aa).

A disordered region spans residues 1-394 (MSEVSGDYNS…PNYPAGKDKL (394 aa)). Basic and acidic residues-rich tracts occupy residues 62–83 (TRTRKGDLVPVGKNHEVPDLQR), 106–125 (IDPEQKTPDIRSEKLRKSVE), and 135–180 (TKSE…HFKS). The segment covering 181-191 (TEQSGTEQPEQ) has biased composition (polar residues). Basic residues predominate over residues 233 to 242 (RPLKASKKAQ). Residues 261-270 (LLDDQEETQE) show a composition bias toward acidic residues. 4 stretches are compositionally biased toward basic and acidic residues: residues 271–286 (ESIKEKVPEPLGDRKP), 295–315 (KSSERSKLKDTLIEPSKDKDP), 323–337 (FPKEKLIKTTEKTGD), and 347–382 (IQEKSQPEPTEKNLELPNKPKPEEERDLPKEDKPES). The region spanning 480–543 (WSPERVAEWI…SYHTRVLLGI (64 aa)) is the SAM domain. The segment covering 594 to 604 (EIKAEEKKEDA) has biased composition (basic and acidic residues). The interval 594–620 (EIKAEEKKEDALPENSLEENEELYEAT) is disordered. Residues 609 to 620 (SLEENEELYEAT) show a composition bias toward acidic residues.

This is Sterile alpha motif domain-containing protein 15 (Samd15) from Mus musculus (Mouse).